A 605-amino-acid chain; its full sequence is Capsid scaffolding protein (605 aa).

Residues histidine 48, serine 116, and histidine 139 each act as charge relay system in the active site. The segment at 235 to 274 (ASDAPDLQKPDKALQSPPPASTDPATMLSGNAGEGATACG) is disordered. The segment at 281 to 300 (QDLISVPRNTFMTLLQTNLD) is interaction with pAP. Disordered regions lie at residues 403 to 431 (DYVP…FPGE) and 489 to 588 (PHQS…KSVS). The Nuclear localization signal motif lies at 410-416 (RSNKRKR). The segment covering 568 to 579 (ASASGVAQSKEP) has biased composition (polar residues). The interval 585 to 605 (KSVSAHLKSIFCEELLNKRVA) is interaction with major capsid protein.

This sequence belongs to the herpesviridae capsid scaffolding protein family. In terms of assembly, homomultimer. Interacts with major capsid protein. As to quaternary structure, exists in a monomer-dimer equilibrium with the dimer being the active species. In terms of processing, capsid scaffolding protein is cleaved by assemblin after formation of the spherical procapsid. As a result, the capsid obtains its mature, icosahedral shape. Cleavages occur at two or more sites: release (R-site) and maturation (M-site).

It is found in the host cytoplasm. Its subcellular location is the host nucleus. The catalysed reaction is Cleaves -Ala-|-Ser- and -Ala-|-Ala- bonds in the scaffold protein.. Functionally, acts as a scaffold protein by binding major capsid protein in the cytoplasm, inducing the nuclear localization of both proteins. Multimerizes in the nucleus such as major capsid protein forms the icosahedral T=16 capsid. Autocatalytic cleavage releases the assembly protein, and subsequently abolishes interaction with major capsid protein. Cleavages products are evicted from the capsid before or during DNA packaging. Its function is as follows. Protease that plays an essential role in virion assembly within the nucleus. Catalyzes the cleavage of the assembly protein after formation of the spherical procapsid. By that cleavage, the capsid matures and gains its icosahedral shape. The cleavage sites seem to include -Ala-Ser-, -Ala-Ala-, as well as Ala-Thr bonds. Assemblin and cleavages products are evicted from the capsid before or during DNA packaging. Plays a major role in capsid assembly. Acts as a scaffold protein by binding major capsid protein. Multimerizes in the nucleus such as major capsid protein forms the icosahedral T=16 capsid. Cleaved by assemblin after capsid completion. The cleavages products are evicted from the capsid before or during DNA packaging. In Homo sapiens (Human), this protein is Capsid scaffolding protein.